The chain runs to 157 residues: Alpha-amylase/trypsin inhibitor RA16 (157 aa).

An N-terminal signal peptide occupies residues 1–26 (MASNKVVISALLVVVVSVLAATTTMA). 5 disulfide bridges follow: Cys-41/Cys-89, Cys-55/Cys-77, Cys-63/Cys-121, Cys-78/Cys-137, and Cys-91/Cys-149.

It belongs to the cereal trypsin/alpha-amylase inhibitor family. Five disulfide bonds are present.

It localises to the secreted. In terms of biological role, seed storage protein. The chain is Alpha-amylase/trypsin inhibitor RA16 from Oryza sativa subsp. japonica (Rice).